The following is a 474-amino-acid chain: Citrate synthase 4, mitochondrial (474 aa).

The transit peptide at 1–16 (MVFFRSVSAFTRLRSR) directs the protein to the mitochondrion. Catalysis depends on residues histidine 308, histidine 354, and aspartate 409.

This sequence belongs to the citrate synthase family. In terms of assembly, homodimer.

It is found in the mitochondrion matrix. The enzyme catalyses oxaloacetate + acetyl-CoA + H2O = citrate + CoA + H(+). It participates in carbohydrate metabolism; tricarboxylic acid cycle; isocitrate from oxaloacetate: step 1/2. In Arabidopsis thaliana (Mouse-ear cress), this protein is Citrate synthase 4, mitochondrial (CSY4).